The sequence spans 121 residues: Large ribosomal subunit protein bL12 (121 aa).

It belongs to the bacterial ribosomal protein bL12 family. Homodimer. Part of the ribosomal stalk of the 50S ribosomal subunit. Forms a multimeric L10(L12)X complex, where L10 forms an elongated spine to which 2 to 4 L12 dimers bind in a sequential fashion. Binds GTP-bound translation factors.

Forms part of the ribosomal stalk which helps the ribosome interact with GTP-bound translation factors. Is thus essential for accurate translation. In Psychromonas ingrahamii (strain DSM 17664 / CCUG 51855 / 37), this protein is Large ribosomal subunit protein bL12.